The primary structure comprises 309 residues: 4-hydroxy-3-methylbut-2-enyl diphosphate reductase (309 aa).

Residue C13 participates in [4Fe-4S] cluster binding. Residues H42 and H75 each contribute to the (2E)-4-hydroxy-3-methylbut-2-enyl diphosphate site. 2 residues coordinate dimethylallyl diphosphate: H42 and H75. Residues H42 and H75 each coordinate isopentenyl diphosphate. A [4Fe-4S] cluster-binding site is contributed by C97. A (2E)-4-hydroxy-3-methylbut-2-enyl diphosphate-binding site is contributed by H125. H125 is a binding site for dimethylallyl diphosphate. H125 contributes to the isopentenyl diphosphate binding site. Residue E127 is the Proton donor of the active site. T165 lines the (2E)-4-hydroxy-3-methylbut-2-enyl diphosphate pocket. [4Fe-4S] cluster is bound at residue C195. Positions 223, 224, 225, and 267 each coordinate (2E)-4-hydroxy-3-methylbut-2-enyl diphosphate. Dimethylallyl diphosphate contacts are provided by S223, S224, N225, and S267. Isopentenyl diphosphate contacts are provided by S223, S224, N225, and S267.

It belongs to the IspH family. Requires [4Fe-4S] cluster as cofactor.

The enzyme catalyses isopentenyl diphosphate + 2 oxidized [2Fe-2S]-[ferredoxin] + H2O = (2E)-4-hydroxy-3-methylbut-2-enyl diphosphate + 2 reduced [2Fe-2S]-[ferredoxin] + 2 H(+). It carries out the reaction dimethylallyl diphosphate + 2 oxidized [2Fe-2S]-[ferredoxin] + H2O = (2E)-4-hydroxy-3-methylbut-2-enyl diphosphate + 2 reduced [2Fe-2S]-[ferredoxin] + 2 H(+). It functions in the pathway isoprenoid biosynthesis; dimethylallyl diphosphate biosynthesis; dimethylallyl diphosphate from (2E)-4-hydroxy-3-methylbutenyl diphosphate: step 1/1. It participates in isoprenoid biosynthesis; isopentenyl diphosphate biosynthesis via DXP pathway; isopentenyl diphosphate from 1-deoxy-D-xylulose 5-phosphate: step 6/6. In terms of biological role, catalyzes the conversion of 1-hydroxy-2-methyl-2-(E)-butenyl 4-diphosphate (HMBPP) into a mixture of isopentenyl diphosphate (IPP) and dimethylallyl diphosphate (DMAPP). Acts in the terminal step of the DOXP/MEP pathway for isoprenoid precursor biosynthesis. The chain is 4-hydroxy-3-methylbut-2-enyl diphosphate reductase from Chlamydia caviae (strain ATCC VR-813 / DSM 19441 / 03DC25 / GPIC) (Chlamydophila caviae).